Here is a 424-residue protein sequence, read N- to C-terminus: Probable threonylcarbamoyladenosine tRNA methylthiotransferase (424 aa).

In terms of domain architecture, MTTase N-terminal spans 1 to 106; it reads MRVAIETYGC…VVDAVYSALN (106 aa). [4Fe-4S] cluster contacts are provided by C10, C44, C73, C143, C147, and C150. The 231-residue stretch at 129-359 folds into the Radical SAM core domain; the sequence is LRENAIAIVS…TDLMRKIGLE (231 aa). A TRAM domain is found at 362–420; sequence KRFVGKKLRVLVTKEGKNGRNLARMNSYRAVVTEGAVGEFVEVKIKDCRFNYLIGQLAA.

This sequence belongs to the methylthiotransferase family. CDKAL1 subfamily. It depends on [4Fe-4S] cluster as a cofactor.

The catalysed reaction is N(6)-L-threonylcarbamoyladenosine(37) in tRNA + (sulfur carrier)-SH + AH2 + 2 S-adenosyl-L-methionine = 2-methylsulfanyl-N(6)-L-threonylcarbamoyladenosine(37) in tRNA + (sulfur carrier)-H + 5'-deoxyadenosine + L-methionine + A + S-adenosyl-L-homocysteine + 2 H(+). Catalyzes the methylthiolation of N6-threonylcarbamoyladenosine (t(6)A), leading to the formation of 2-methylthio-N6-threonylcarbamoyladenosine (ms(2)t(6)A) at position 37 in tRNAs that read codons beginning with adenine. In Archaeoglobus fulgidus (strain ATCC 49558 / DSM 4304 / JCM 9628 / NBRC 100126 / VC-16), this protein is Probable threonylcarbamoyladenosine tRNA methylthiotransferase.